Here is a 970-residue protein sequence, read N- to C-terminus: Testis anion transporter 1 (970 aa).

The Cytoplasmic segment spans residues 1 to 95; sequence MAQLERSAIS…YRLKDWLLGD (95 aa). Residues 96–116 traverse the membrane as a helical segment; it reads LLAGISVGLVQVPQGLTLSLL. The Extracellular portion of the chain corresponds to 117–119; the sequence is ARQ. Residues 120 to 140 form a helical membrane-spanning segment; the sequence is LIPPLNIAYAAFCSSVIYVIF. Over 141-146 the chain is Cytoplasmic; sequence GSCHQM. A helical transmembrane segment spans residues 147–167; sequence SIGSFFLVSALLINVLKVSPF. Residues 168–202 are Extracellular-facing; that stretch reads NNGQLVMGSFVKNEFSAPSYLMGYNKSLSVVATTT. A glycan (N-linked (GlcNAc...) asparagine) is linked at Asn192. Residues 203-223 form a helical membrane-spanning segment; sequence FLTGIIQLIMGVLGLGFIATY. Topologically, residues 224–232 are cytoplasmic; the sequence is LPESAMSAY. Residues 233-253 traverse the membrane as a helical segment; the sequence is LAAVALHIMLSQLTFIFGIMI. Topologically, residues 254-270 are extracellular; it reads SFHAGPISFFYDIINYC. A helical membrane pass occupies residues 271–291; sequence VALPKANSTSILVFLTVVVAL. The Cytoplasmic portion of the chain corresponds to 292–307; sequence RINKCIRISFNQYPIE. The helical transmembrane segment at 308-328 threads the bilayer; that stretch reads FPMELFLIIGFTVIANKISMA. The Extracellular segment spans residues 329–355; it reads TETSQTLIDMIPYSFLLPVTPDFSLLP. A helical membrane pass occupies residues 356-376; the sequence is KIILQAFSLSLVSSFLLIFLG. Residues 377-392 lie on the Cytoplasmic side of the membrane; that stretch reads KKIASLHNYSVNSNQD. The chain crosses the membrane as a helical span at residues 393–413; that stretch reads LIAIGLCNVVSSFFRSCVFTG. Residues 414–429 are Extracellular-facing; the sequence is AIARTIIQDKSGGRQQ. The chain crosses the membrane as a helical span at residues 430-450; it reads FASLVGAGVMLLLMVKMGHFF. The Cytoplasmic portion of the chain corresponds to 451–452; the sequence is YT. A helical membrane pass occupies residues 453 to 473; sequence LPNAVLAGIILSNVIPYLETI. At 474–497 the chain is on the extracellular side; it reads SNLPSLWRQDQYDCALWMMTFSSS. Residues 498–518 form a helical membrane-spanning segment; it reads IFLGLDIGLIISVVSAFFITT. Residues 519–970 are Cytoplasmic-facing; it reads VRSHRAKILL…SPEGNSNEDV (452 aa). The region spanning 543-795 is the STAS domain; the sequence is DYREIITIPG…LSVHDAVLFA (253 aa). Positions 664 to 970 are interaction with RACGAP1; the sequence is TVSSVSQKNQ…SPEGNSNEDV (307 aa). The span at 858-868 shows a compositional bias: acidic residues; the sequence is SELDLELESEQ. The tract at residues 858-970 is disordered; the sequence is SELDLELESE…SPEGNSNEDV (113 aa). A compositionally biased stretch (basic and acidic residues) spans 877–898; the sequence is DLDRELEPEMEPKAETETKTQT. Low complexity predominate over residues 938–948; the sequence is STQSQTQTRTW.

Belongs to the SLC26A/SulP transporter (TC 2.A.53) family. In terms of assembly, interacts with RACGAP1. Interacts with CFTR; stimulates anion transport activity of CFTR. Post-translationally, N-glycosylated. As to expression, expression observed exclusively in testis, restricted to the meiotic phase of the germ cell. Abundant expression located in the seminiferous tubules, concentrated on the luminal side of the tubuli harboring the spermatocytes and spermatids.

The protein localises to the membrane. It catalyses the reaction sulfate(out) + chloride(in) = sulfate(in) + chloride(out). The enzyme catalyses oxalate(in) + chloride(out) = oxalate(out) + chloride(in). Activity is inhibited by 4,4'-Di-isothiocyanatostilbene-2,2'-disulfonic acid (DIDS - an inhibitor of several anion channels and transporters) and gluconate. In terms of biological role, antiporter that mediates the exchange of sulfate and oxalate against chloride ions across a membrane. Stimulates anion transport activity of CFTR. May cooperate with CFTR in the regulation of chloride and bicarbonate ions fluxes required for activation of the ADCY10/PKA pathway during sperm motility and sperm capacitation. May play a role in sperm tail differentiation and motility and hence male fertility. This chain is Testis anion transporter 1, found in Homo sapiens (Human).